A 148-amino-acid polypeptide reads, in one-letter code: 3-dehydroquinate dehydratase (148 aa).

Tyrosine 24 acts as the Proton acceptor in catalysis. Positions 75, 81, and 88 each coordinate substrate. Histidine 101 acts as the Proton donor in catalysis. Residues 102–103 (LS) and arginine 112 each bind substrate.

It belongs to the type-II 3-dehydroquinase family. In terms of assembly, homododecamer.

The enzyme catalyses 3-dehydroquinate = 3-dehydroshikimate + H2O. Its pathway is metabolic intermediate biosynthesis; chorismate biosynthesis; chorismate from D-erythrose 4-phosphate and phosphoenolpyruvate: step 3/7. Catalyzes a trans-dehydration via an enolate intermediate. The sequence is that of 3-dehydroquinate dehydratase from Rhizobium meliloti (strain 1021) (Ensifer meliloti).